Reading from the N-terminus, the 281-residue chain is Sulfur carrier protein FdhD (281 aa).

Residue C117 is the Cysteine persulfide intermediate of the active site.

The protein belongs to the FdhD family.

It localises to the cytoplasm. Its function is as follows. Required for formate dehydrogenase (FDH) activity. Acts as a sulfur carrier protein that transfers sulfur from IscS to the molybdenum cofactor prior to its insertion into FDH. The polypeptide is Sulfur carrier protein FdhD (Xanthomonas euvesicatoria pv. vesicatoria (strain 85-10) (Xanthomonas campestris pv. vesicatoria)).